The chain runs to 846 residues: Leucine--tRNA ligase (846 aa).

The 'HIGH' region motif lies at 42–52 (PYPSGNLHMGH). The 'KMSKS' region signature appears at 586–590 (KMSKS). Residue lysine 589 participates in ATP binding.

The protein belongs to the class-I aminoacyl-tRNA synthetase family.

It is found in the cytoplasm. It carries out the reaction tRNA(Leu) + L-leucine + ATP = L-leucyl-tRNA(Leu) + AMP + diphosphate. This Heliobacterium modesticaldum (strain ATCC 51547 / Ice1) protein is Leucine--tRNA ligase.